Reading from the N-terminus, the 358-residue chain is Probable branched-chain-amino-acid aminotransferase (358 aa).

Lysine 196 carries the post-translational modification N6-(pyridoxal phosphate)lysine.

The protein belongs to the class-IV pyridoxal-phosphate-dependent aminotransferase family. Pyridoxal 5'-phosphate is required as a cofactor.

It carries out the reaction L-leucine + 2-oxoglutarate = 4-methyl-2-oxopentanoate + L-glutamate. The enzyme catalyses L-isoleucine + 2-oxoglutarate = (S)-3-methyl-2-oxopentanoate + L-glutamate. The catalysed reaction is L-valine + 2-oxoglutarate = 3-methyl-2-oxobutanoate + L-glutamate. It participates in amino-acid biosynthesis; L-isoleucine biosynthesis; L-isoleucine from 2-oxobutanoate: step 4/4. It functions in the pathway amino-acid biosynthesis; L-leucine biosynthesis; L-leucine from 3-methyl-2-oxobutanoate: step 4/4. The protein operates within amino-acid biosynthesis; L-valine biosynthesis; L-valine from pyruvate: step 4/4. Acts on leucine, isoleucine and valine. The polypeptide is Probable branched-chain-amino-acid aminotransferase (ilvE) (Staphylococcus epidermidis (strain ATCC 12228 / FDA PCI 1200)).